The chain runs to 486 residues: MSLEDSLRSLSLDYLNLLINGQAFSDVTFSVEGRLVHAHRCILAARSLFFRKFFCGGSDPSASSGLIDQTGIRVNPSGSPRSSNGVLVIPVNSVGYEVFLLLLQFLYSGQVSIVPQKHEARPNCGERGCWHTHCSSAVDLALDTLAAARYFGVEQLALLTQKQLASMVEKASIEDVMKVLLASRKQDMQQLWTTCSHLVAKSGLPPEVLAKHLPIEIVAKIEELRLKSSIARRSMMPHHHHHHHQHDLNAAADLEDQKIRRMRRALDSSDVELVKLMVMGEGLNLDEALALHYAVENCSREVVKALLELGAADVNYPAGPAGKTPLHIAAEMVSPDMVAVLLDHHADPNVRTVDNVTPLDILRTLTSDFLFKGAIPGLTHIEPNKLRLCLELVQSAALVLSREEGNANNNPPSSTTTTLPMYHHPMNDDHNSSSSSGNNHNIANLNLDSRLVYLNLGATVGSGQMSDDHGGRHGDPAMYHHSHHDY.

In terms of domain architecture, BTB spans 25–115 (SDVTFSVEGR…LYSGQVSIVP (91 aa)). The C2HC NPR-type zinc finger occupies 121–135 (RPNCGERGCWHTHCS). C124, C129, H131, and C134 together coordinate Zn(2+). ANK repeat units lie at residues 257 to 286 (QKIR…LNLD), 287 to 316 (EALA…DVNY), 321 to 350 (AGKT…DPNV), and 354 to 388 (DNVT…KLRL). Disordered stretches follow at residues 403–441 (EEGN…NNHN) and 464–486 (QMSD…HHDY). Composition is skewed to low complexity over residues 406–418 (NANN…TTTT) and 432–441 (SSSSSGNNHN). Positions 466-475 (SDDHGGRHGD) are enriched in basic and acidic residues.

The protein belongs to the plant 'ANKYRIN-BTB/POZ' family. 'NOOT-BOP-COCH-like' (NBCL) subfamily. As to quaternary structure, homodimer.

It localises to the nucleus. Its subcellular location is the cytoplasm. The protein localises to the cell membrane. The protein operates within protein modification; protein ubiquitination. In terms of biological role, may act as a substrate-specific adapter of an E3 ubiquitin-protein ligase complex (CUL3-RBX1-BTB) which mediates the ubiquitination and subsequent proteasomal degradation of target proteins. Transcriptional co-regulator involved in the promotion of leaf and floral meristem fate and determinacy. Necessary for the development of stipules at the base of petioles. Required for the abscission of senescent organs, probably by regulating the cell wall disorganization in abscission zones (AZs, e.g. pulvini at the base of leaves). Promotes slightly root-cap border cells separation from the root tip. Involved in the coordination of the symbiotic nodule developmental program; promotes the formation of root nodules by interacting directly with APP1 to modulate the expression of the nuclear transcription factor Y subunit (NF-YA1), a key nodulin. Necessary for the robust maintenance of nodule identity throughout the nodule developmental program. In Lupinus angustifolius (Narrow-leaved blue lupine), this protein is BTB/POZ domain and ankyrin repeat-containing protein NBCL.